A 74-amino-acid chain; its full sequence is uncharacterized protein (74 aa).

The stretch at 25–62 (QQTIDRLAGLELRMKQLIRAIEVNNELLRTMQEQQNRV) forms a coiled coil.

This is an uncharacterized protein from Bacillus subtilis (strain 168).